A 97-amino-acid polypeptide reads, in one-letter code: Large ribosomal subunit protein uL23 (97 aa).

It belongs to the universal ribosomal protein uL23 family. As to quaternary structure, part of the 50S ribosomal subunit. Contacts protein L29, and trigger factor when it is bound to the ribosome.

One of the early assembly proteins it binds 23S rRNA. One of the proteins that surrounds the polypeptide exit tunnel on the outside of the ribosome. Forms the main docking site for trigger factor binding to the ribosome. The sequence is that of Large ribosomal subunit protein uL23 from Brucella suis (strain ATCC 23445 / NCTC 10510).